The sequence spans 471 residues: 3-isopropylmalate dehydratase large subunit (471 aa).

Cysteine 347, cysteine 407, and cysteine 410 together coordinate [4Fe-4S] cluster.

It belongs to the aconitase/IPM isomerase family. LeuC type 1 subfamily. In terms of assembly, heterodimer of LeuC and LeuD. It depends on [4Fe-4S] cluster as a cofactor.

The catalysed reaction is (2R,3S)-3-isopropylmalate = (2S)-2-isopropylmalate. It functions in the pathway amino-acid biosynthesis; L-leucine biosynthesis; L-leucine from 3-methyl-2-oxobutanoate: step 2/4. Catalyzes the isomerization between 2-isopropylmalate and 3-isopropylmalate, via the formation of 2-isopropylmaleate. The sequence is that of 3-isopropylmalate dehydratase large subunit from Geobacillus kaustophilus (strain HTA426).